Here is a 247-residue protein sequence, read N- to C-terminus: Cell division protein ZapD (247 aa).

This sequence belongs to the ZapD family. In terms of assembly, interacts with FtsZ.

It is found in the cytoplasm. Functionally, cell division factor that enhances FtsZ-ring assembly. Directly interacts with FtsZ and promotes bundling of FtsZ protofilaments, with a reduction in FtsZ GTPase activity. The protein is Cell division protein ZapD of Shigella boydii serotype 18 (strain CDC 3083-94 / BS512).